We begin with the raw amino-acid sequence, 123 residues long: Defensin beta 118 (123 aa).

The signal sequence occupies residues 1–19; sequence MKLLLLALPMLVLLPQVIP. 3 disulfide bridges follow: Cys-27/Cys-54, Cys-34/Cys-48, and Cys-38/Cys-55. A propeptide spanning residues 65-123 is cleaved from the precursor; the sequence is VPTTSPTPLSDSTRGVIDDILTVRFTTDYFEVSSKKNMVEESEVGQGTQTSLPNVHHSS. The tract at residues 100–123 is disordered; that stretch reads KNMVEESEVGQGTQTSLPNVHHSS. Residues 109-123 are compositionally biased toward polar residues; it reads GQGTQTSLPNVHHSS.

This sequence belongs to the beta-defensin family. Post-translationally, the three-dimensional structure formed by the three intramolecular disulfide bridges is indispensable for antimicrobial activity.

The protein resides in the secreted. In terms of biological role, host defense peptide that exhibits antimicrobial activity against both Gram-negative bacteria, such as E.coli and S.typhimurium, and Gram-positive bacteria, such as S.aureus and B.subtilis. Inhibits cell adhesion of E.coli on intestinal epithelial enterocytes. Causes rapid permeabilization of both the outer and inner membrane of E.coli, leading to morphological alterations on the bacterial surface. Binds to bacterial lipopolysaccharides (LPS) with high affinity, and may thereby be involved in immunoregulation through LPS neutralization. May contribute to epididymal innate immunity and protect the sperm against attack by microorganisms. The polypeptide is Defensin beta 118 (DEFB118) (Pongo pygmaeus (Bornean orangutan)).